The chain runs to 219 residues: Claudin-3 (219 aa).

At 1–8 (MSMGLEIT) the chain is on the cytoplasmic side. Residues 9–29 (GTSLAVLGWLCTIVCCALPMW) form a helical membrane-spanning segment. The Extracellular segment spans residues 30–80 (RVSAFIGSSIITAQITWEGLWMNCVVQSTGQMQCKMYDSLLALPQDLQAAR). A helical membrane pass occupies residues 81–101 (ALIVVSILLAAFGLLVALVGA). Topologically, residues 102–115 (QCTNCVQDETAKAK) are cytoplasmic. Residues 116–136 (ITIVAGVLFLLAAVLTLVPVS) form a helical membrane-spanning segment. Topologically, residues 137 to 161 (WSANTIIRDFYNPLVPEAQKREMGT) are extracellular. The helical transmembrane segment at 162-182 (GLYVGWAAAALQLLGGALLCC) threads the bilayer. Residues 183–219 (SCPPREKYAPTKILYSAPRSTGPGTGTGTAYDRKDYV) are Cytoplasmic-facing. Position 197 is a phosphotyrosine (Y197). Phosphoserine is present on S198. Positions 218-219 (YV) are interactions with TJP1, TJP2 and TJP3.

It belongs to the claudin family. In terms of assembly, can form homo- and heteropolymers with other CLDN. Homopolymers interact with CLDN1 and CLDN2 homopolymers. Interacts in cis (within the same plasma membrane) with CLDN19. Directly interacts with TJP1/ZO-1, TJP2/ZO-2 and TJP3/ZO-3.

Its subcellular location is the cell junction. It is found in the tight junction. The protein resides in the cell membrane. Functionally, plays a major role in tight junction-specific obliteration of the intercellular space, through calcium-independent cell-adhesion activity. The polypeptide is Claudin-3 (Cldn3) (Rattus norvegicus (Rat)).